The following is a 2715-amino-acid chain: Chromodomain-helicase-DNA-binding protein 6 (2715 aa).

The segment covering 1-11 has biased composition (basic and acidic residues); it reads MKMKIQKKEKQ. Disordered stretches follow at residues 1-30 and 66-244; these read MKMK…SVNF and EEAA…QVKR. Residues 1-747 are required for DNA-dependent ATPase activity; it reads MKMKIQKKEK…MMELRKCCNH (747 aa). The segment covering 12-27 has biased composition (polar residues); that stretch reads LSNLKVLNHSPMSDAS. Positions 123–172 are enriched in basic and acidic residues; it reads EPKEPKEPRKAKEPKKAKEHKEPKQKDGAKKARKPREASGTKEAKEKRSC. 2 consecutive Chromo domains span residues 292 to 343 and 375 to 439; these read NIIE…KDPR and VEVD…KHVE. The 175-residue stretch at 473–647 folds into the Helicase ATP-binding domain; the sequence is LFNWYNRKNC…FSLLNFLEPS (175 aa). Residue 486 to 493 participates in ATP binding; sequence DEMGLGKT. The short motif at 598–601 is the DEAH box element; that stretch reads DEAH. Positions 787 to 956 constitute a Helicase C-terminal domain; it reads LIDKLLPKLI…LSKMEVEDLL (170 aa). Residues 1318 to 1390 are disordered; the sequence is KSLSAEQGVT…SDPDKSPWPV (73 aa). The segment covering 1321-1330 has biased composition (polar residues); that stretch reads SAEQGVTDGT. Composition is skewed to basic and acidic residues over residues 1333 to 1351 and 1367 to 1376; these read IPER…KVDG and FSEKKDDSRA. Residues 1449–1503 enclose the Myb-like domain; sequence RWTRREQADFYRTVSSFGVVYDQEKKTFDWTQFRIISRLDKKSDESLEQYFYSFV. The span at 2027-2038 shows a compositional bias: basic and acidic residues; the sequence is FENKDDYDRDGN. Disordered stretches follow at residues 2027–2063, 2116–2148, 2321–2351, 2373–2422, 2547–2602, and 2648–2715; these read FENK…ITGD, SQQY…AAEH, QATL…QAEK, PGFG…FLPE, TSTA…PAIT, and VGLE…NDTN. Polar residues predominate over residues 2116–2141; sequence SQQYEPSGTLPTPVLTSSAGSRTSLS. The span at 2329–2346 shows a compositional bias: low complexity; the sequence is PEGPGPATSAPEPATAAS. Positions 2547–2560 are enriched in low complexity; that stretch reads TSTAPASLSSTTKS. Composition is skewed to basic and acidic residues over residues 2567-2588 and 2706-2715; these read KTAE…EDKP and ALKDSNNDTN.

This sequence belongs to the SNF2/RAD54 helicase family. In terms of assembly, interacts with NFE2L2; involved in activation of the transcription. (Microbial infection) Interacts with the influenza A polymerase complex composed fo PB1, PB2 and PA. As to quaternary structure, (Microbial infection) Interacts (via N-terminus) with human papillomavirus protein E8^E2C (via C-terminus); this interaction induces transcriptional repression of the viral genome. In terms of tissue distribution, widely expressed.

It localises to the nucleus. The protein resides in the nucleoplasm. The catalysed reaction is ATP + H2O = ADP + phosphate + H(+). Functionally, ATP-dependent chromatin-remodeling factor. Regulates transcription by disrupting nucleosomes in a largely non-sliding manner which strongly increases the accessibility of chromatin; nucleosome disruption requires ATP. Activates transcription of specific genes in response to oxidative stress through interaction with NFE2L2. Its function is as follows. (Microbial infection) Acts as a transcriptional repressor of different viruses including influenza virus or papillomavirus. During influenza virus infection, the viral polymerase complex localizes CHD6 to inactive chromatin where it gets degraded in a proteasome independent-manner. In Homo sapiens (Human), this protein is Chromodomain-helicase-DNA-binding protein 6 (CHD6).